The sequence spans 113 residues: Tubulin-folding cofactor A (113 aa).

The disordered stretch occupies residues 83–113 (LEETDEKEGPEIEDAKKTVADVEKQFPTEDA). The span at 89–113 (KEGPEIEDAKKTVADVEKQFPTEDA) shows a compositional bias: basic and acidic residues.

The protein belongs to the TBCA family. As to quaternary structure, monomer. Supercomplex made of cofactors A to E. Cofactors A and D function by capturing and stabilizing tubulin in a quasi-native conformation. Cofactor E binds to the cofactor D-tubulin complex; interaction with cofactor C then causes the release of tubulin polypeptides that are committed to the native state. Interacts with TUBB9. Expressed in leaves, roots, flowers and stems.

In terms of biological role, tubulin-folding protein involved in the control of the alpha-/beta-tubulin monomer balance. Functions as a reservoir of bound and non-toxic beta-tubulin. Required in the developing embryo. This Arabidopsis thaliana (Mouse-ear cress) protein is Tubulin-folding cofactor A (TFCA).